We begin with the raw amino-acid sequence, 298 residues long: Probable 3-hydroxyacyl-CoA dehydrogenase F54C8.1 (298 aa).

It belongs to the 3-hydroxyacyl-CoA dehydrogenase family. As to quaternary structure, homodimer.

The protein resides in the mitochondrion matrix. It carries out the reaction a (3S)-3-hydroxyacyl-CoA + NAD(+) = a 3-oxoacyl-CoA + NADH + H(+). The protein operates within lipid metabolism; fatty acid beta-oxidation. The chain is Probable 3-hydroxyacyl-CoA dehydrogenase F54C8.1 from Caenorhabditis elegans.